The sequence spans 413 residues: Protein trichome birefringence-like 31 (413 aa).

The chain crosses the membrane as a helical; Signal-anchor for type II membrane protein span at residues 12 to 34 (IQSIFQVVLVSLLVLGSVRWILD). A GDS motif motif is present at residues 141 to 143 (GDS). The short motif at 384–398 (DCIHWCLPGVPDTWN) is the DCXHWCLPGXXDXWN motif element.

Belongs to the PC-esterase family. TBL subfamily.

It is found in the membrane. In terms of biological role, may act as a bridging protein that binds pectin and other cell wall polysaccharides. Probably involved in maintaining esterification of pectins. May be involved in the specific O-acetylation of cell wall polymers. In Arabidopsis thaliana (Mouse-ear cress), this protein is Protein trichome birefringence-like 31 (TBL31).